We begin with the raw amino-acid sequence, 156 residues long: ATP synthase subunit b (156 aa).

Residues 7–27 traverse the membrane as a helical segment; that stretch reads LIGQTVAFIIFVWFCMKFVWP.

The protein belongs to the ATPase B chain family. As to quaternary structure, F-type ATPases have 2 components, F(1) - the catalytic core - and F(0) - the membrane proton channel. F(1) has five subunits: alpha(3), beta(3), gamma(1), delta(1), epsilon(1). F(0) has three main subunits: a(1), b(2) and c(10-14). The alpha and beta chains form an alternating ring which encloses part of the gamma chain. F(1) is attached to F(0) by a central stalk formed by the gamma and epsilon chains, while a peripheral stalk is formed by the delta and b chains.

The protein resides in the cell inner membrane. Functionally, f(1)F(0) ATP synthase produces ATP from ADP in the presence of a proton or sodium gradient. F-type ATPases consist of two structural domains, F(1) containing the extramembraneous catalytic core and F(0) containing the membrane proton channel, linked together by a central stalk and a peripheral stalk. During catalysis, ATP synthesis in the catalytic domain of F(1) is coupled via a rotary mechanism of the central stalk subunits to proton translocation. Its function is as follows. Component of the F(0) channel, it forms part of the peripheral stalk, linking F(1) to F(0). The chain is ATP synthase subunit b from Shewanella oneidensis (strain ATCC 700550 / JCM 31522 / CIP 106686 / LMG 19005 / NCIMB 14063 / MR-1).